Reading from the N-terminus, the 408-residue chain is tRNA pseudouridine synthase D (408 aa).

Residue Asp-82 is the Nucleophile of the active site. One can recognise a TRUD domain in the interval Gly-157 to Val-367.

It belongs to the pseudouridine synthase TruD family.

It catalyses the reaction uridine(13) in tRNA = pseudouridine(13) in tRNA. Functionally, responsible for synthesis of pseudouridine from uracil-13 in transfer RNAs. The polypeptide is tRNA pseudouridine synthase D (Geobacter sulfurreducens (strain ATCC 51573 / DSM 12127 / PCA)).